The primary structure comprises 980 residues: SLIT and NTRK-like protein 3 (980 aa).

The first 27 residues, 1-27 (MMKPSIAEMLHRGRMLWIILLSTIALG), serve as a signal peptide directing secretion. The Extracellular portion of the chain corresponds to 30 to 655 (TPIPLIEDSE…SPPGGPVPLS (626 aa)). A glycan (N-linked (GlcNAc...) asparagine) is linked at asparagine 69. LRR repeat units lie at residues 79–100 (RPFKLYLQRNSMRRLYTNSFLH), 103–124 (NAVSINLGNNALQDIQTGAFNG), 127–148 (ILKRLYLHENKLDVFRNDTFLG), 151–172 (SLEYLQADYNVIKRIESGAFRN), 175–196 (KLRVLILNDNLIPVLPTNLFKA), and 198–219 (SLTHLDLRGNRLKVLFYRGMLD). In terms of domain architecture, LRRCT 1 spans 233-284 (NPWNCTCEIVQLKSWLERIPYTALVGDITCETPFHFHGKDLREIKKTELCPL). Residues 326–361 (EYKSSNKQPKPTKQPRTPRPPSTSQALYPGPNQPPI) form a disordered region. The LRRNT domain occupies 365–407 (QTRPPIPIICPTGCTCNLHINDLGLTVNCKERGFNNISELLPR). 6 LRR repeats span residues 410 to 431 (NAKKLYLSSNLIQKIYRSDFWN), 434 to 455 (SLDLLHLGNNRISYVQDGAFIN), 458 to 479 (NLKSLFLNGNDIEKLTPGMFRG), 482 to 503 (SLHYLYFEFNVIREIQPAAFSL), 506 to 527 (NLKLLFLNNNLLRTLPTDAFAG), and 529 to 550 (SLARLNLRKNYFLYLPVAGVLE). Positions 563–614 (NPWDCTCDLVPFKQWIETISSVSVVGDVLCRTPENLTHRDVRTIELEVLCPE) constitute an LRRCT 2 domain. A glycan (N-linked (GlcNAc...) asparagine) is linked at asparagine 597. Residues 622–644 (GPSPPQPGDYHPNGGPTSASPYE) form a disordered region. Residues 656–676 (VLILSLLVLFFSAVFVAAGLF) form a helical membrane-spanning segment. Residues 677–980 (AYVLRRRRKK…EVLEKTAYRF (304 aa)) are Cytoplasmic-facing. Disordered stretches follow at residues 709–735 (LFEDSGGNSGGSGGGGRPTLSSPEKAP) and 762–785 (EEEVAASAAQDTGATDRGGPGTQP). Positions 715-725 (GNSGGSGGGGR) are enriched in gly residues.

This sequence belongs to the SLITRK family. In terms of tissue distribution, broadly expressed in embryonic brain with highest expression in cortical plate, pyramidal cell layer of the hippocampus, thalamus and hypothalamus.

The protein localises to the membrane. Its function is as follows. Suppresses neurite outgrowth. The polypeptide is SLIT and NTRK-like protein 3 (Slitrk3) (Mus musculus (Mouse)).